The primary structure comprises 426 residues: Molybdopterin molybdenumtransferase 1 (426 aa).

Belongs to the MoeA family. Mg(2+) is required as a cofactor.

It carries out the reaction adenylyl-molybdopterin + molybdate = Mo-molybdopterin + AMP + H(+). It functions in the pathway cofactor biosynthesis; molybdopterin biosynthesis. In terms of biological role, catalyzes the insertion of molybdate into adenylated molybdopterin with the concomitant release of AMP. This is Molybdopterin molybdenumtransferase 1 (moeA1) from Mycobacterium tuberculosis (strain ATCC 25618 / H37Rv).